The chain runs to 274 residues: SNLKGAANAEAGSEKLKEKQQEAAVELDELKKRREERRKILEEEEQKKKQEEAERKIREEEEKKRMKEEIERRRAEAAEKRQKMPEDGVSEEKKPFKCFSPKGSSLKIEERAEFLNKSAQKSGMKPAHTTAVVSKIDSRLEQYTSAVVGNKAAKPAKPAASDLPVPAEGVRNIKSMWEKGNVFSSPGGTGTPNKETAGLKVGVSSRINEWLTKTPEGNKSPAPKPSDLRPGDVSGKRNLWEKQSVEKPAASSSKVTATGKKSETDGLRQFEKEP.

Disordered regions lie at residues Ser-1–Lys-102 and Lys-179–Pro-274. Basic and acidic residues-rich tracts occupy residues Gly-12 to Gln-21 and Asp-28 to Pro-95. Residues Val-182–Lys-194 are compositionally biased toward polar residues. Basic and acidic residues-rich tracts occupy residues Ser-226–Val-245 and Lys-260–Pro-274.

Its subcellular location is the cytoplasm. The protein resides in the cytoskeleton. The protein localises to the myofibril. It localises to the stress fiber. Functionally, control of actomyosin interactions in smooth muscle and nonmuscle cells (could act as a bridge between myosin and actin filaments). Inhibits the actin-activated ATPase of myosin this inhibition is attenuated by calcium-calmodulin and is potentiated by tropomyosin. Interacts with actin, myosin, 2 molecules of tropomyosin and with calmodulin. This is Caldesmon, smooth muscle (CALD1) from Meleagris gallopavo (Wild turkey).